The following is a 40-amino-acid chain: Natriuretic peptide PaNP-b (40 aa).

Residues C9 and C25 are joined by a disulfide bond. The propeptide occupies 36 to 40 (IPGGS).

Belongs to the natriuretic peptide family. In terms of tissue distribution, expressed by the venom gland.

The protein localises to the secreted. Its function is as follows. Snake venom natriuretic peptide that targets both NPR1 and NPR2. Exhibits hypotensive and vasodepressor activities. This Pseudechis australis (Mulga snake) protein is Natriuretic peptide PaNP-b.